Here is a 911-residue protein sequence, read N- to C-terminus: MSSSQQSGRANELRTPGRANSSSREAVDSSPLFFPASSPGSTRLTTPRTTARTPLASSPLLFESSSPGPNIPQSSRSHLLSQRNDLFLDSSSQRTPRSTRRGDIHSSVQMSTPSRRREVDPQRPGVSTPSSLLFSGSDALTFSQAHPSSEVADDTVRVIWGTNVSIQESIASFRGFLRGFKKKYRPEYRNELMPPPDAEQLVYIEALRNMRIMGLEILNLDVQDLKHYPPTKKLYHQLYSYPQEIIPIMDQTIKDVMLDLLGTNPPEDVLNDIELKIYKIRPFNLEKCINMRDLNPGDIDKLISIKGLVLRCTPVIPDMKQAFFRCSVCGHCVTVEIDRGRIAEPIKCPREVCGATNAMQLIHNRSEFADKQVIKLQETPDVVPDGQTPHSVSLCVYDELVDSARAGDRIEVTGIFRCVPVRLNPRMRTVKSLFKTYVDVVHIKKQDKRRLGTDPSTLESDIAEDAALQIDEVRKISDEEVEKIQQVSKRDDIYDILSRSLAPSIYEMDDVKKGLLLQLFGGTNKSFHKGASPRYRGDINILMCGDPSTSKSQILKYVHKIAPRGVYTSGKGSSAVGLTAYITRDQDTKQLVLESGALVLSDGGICCIDEFDKMSDATRSILHEVMEQQTVTVAKAGIITTLNARTSILASANPIGSKYNPDLPVTKNIDLPPTLLSRFDLVYLILDRVDETLDRKLANHIVSMYMEDTPEHATDMEVFSVEFLTSYITYARNNINPVISEEAAKELVNAYVGMRKLGEDVRASEKRITATTRQLESMIRLSEAHAKMHLRNVVEVGDVLEAARLIKTAIKDYATDPATGKISLDLIYVNERETLVPEDMVKELANLISNLTVGGKTMLVSQLLTRFREQSSTRLDASDFEACLGALERRGRIKVITSAGHRIVRSIAQTD.

Residues 1–132 are disordered; that stretch reads MSSSQQSGRA…RPGVSTPSSL (132 aa). 3 positions are modified to phosphoserine: serine 37, serine 38, and serine 41. Low complexity predominate over residues 42 to 56; sequence TRLTTPRTTARTPLA. Residues 63-84 are compositionally biased toward polar residues; that stretch reads ESSSPGPNIPQSSRSHLLSQRN. Serine 92 is subject to Phosphoserine. Residues 493–702 form the MCM domain; sequence IYDILSRSLA…LDRKLANHIV (210 aa). Residue 545-552 coordinates ATP; sequence GDPSTSKS. The Arginine finger motif lies at 677–680; the sequence is SRFD.

The protein belongs to the MCM family. Component of the mcm2-7 complex. The complex forms a toroidal hexameric ring with the proposed subunit order mcm2-mcm6-mcm4-mcm7-mcm3-mcm5. The heterodimers of mcm4/mcm6 and mcm3/mcm5 interact with mcm2 and mcm7.

It is found in the nucleus. The enzyme catalyses ATP + H2O = ADP + phosphate + H(+). Its function is as follows. Acts as a component of the mcm2-7 complex (mcm complex) which is the putative replicative helicase essential for 'once per cell cycle' DNA replication initiation and elongation in eukaryotic cells. The active ATPase sites in the mcm2-7 ring are formed through the interaction surfaces of two neighboring subunits such that a critical structure of a conserved arginine finger motif is provided in trans relative to the ATP-binding site of the Walker A box of the adjacent subunit. The six ATPase active sites, however, are likely to contribute differentially to the complex helicase activity. Required for S phase execution. The protein is DNA replication licensing factor mcm4 (mcm4) of Schizosaccharomyces pombe (strain 972 / ATCC 24843) (Fission yeast).